The chain runs to 196 residues: Ribosome maturation factor RimP (196 aa).

Positions 164-196 (LAPQKPNKPGPKKPGHEKKKPSNESAAGKPRAE) are disordered. The segment covering 173-182 (GPKKPGHEKK) has biased composition (basic residues).

Belongs to the RimP family.

The protein resides in the cytoplasm. Functionally, required for maturation of 30S ribosomal subunits. This Xanthomonas axonopodis pv. citri (strain 306) protein is Ribosome maturation factor RimP.